A 746-amino-acid polypeptide reads, in one-letter code: Rhizobactin receptor (746 aa).

A signal peptide spans 1–26 (MGNNENGGISFCVFVVVIGFGTGAVA). The TonB box motif lies at 40–47 (EEIVVTGG). A TBDR plug domain is found at 52–163 (QISEIARTIY…TGGIINIITK (112 aa)). The TBDR beta-barrel domain maps to 169–746 (EPGLHAEVTG…TFAVSLTKVF (578 aa)). Positions 729-746 (FDYKGRGRTFAVSLTKVF) match the TonB C-terminal box motif.

This sequence belongs to the TonB-dependent receptor family.

Its subcellular location is the cell outer membrane. Receptor for the siderophore rhizobactin. The polypeptide is Rhizobactin receptor (rhtA) (Rhizobium meliloti (strain 1021) (Ensifer meliloti)).